Reading from the N-terminus, the 1045-residue chain is Fibrosin-1-like protein (1045 aa).

The segment covering Met1–Arg12 has biased composition (basic residues). Disordered stretches follow at residues Met1–Ala86 and Asp99–Pro315. A compositionally biased stretch (basic and acidic residues) spans Ala13–Arg28. A compositionally biased stretch (low complexity) spans Gly48–Thr63. The segment covering Asp99–Glu123 has biased composition (basic and acidic residues). Positions Glu183–His197 are enriched in polar residues. A compositionally biased stretch (pro residues) spans His270 to Gly280. Ser340 is subject to Phosphoserine. Residues Gln443–Gln457 are compositionally biased toward basic residues. 2 disordered regions span residues Gln443–Pro462 and Glu719–Val753. Pro residues predominate over residues Pro741–Pro750. Ser790 bears the Phosphoserine mark. Disordered regions lie at residues Glu809–Gln880 and Ala910–Asp961. Residues Ala817–Ala837 are compositionally biased toward basic and acidic residues. A Glycyl lysine isopeptide (Lys-Gly) (interchain with G-Cter in SUMO2) cross-link involves residue Lys858. A compositionally biased stretch (low complexity) spans Ala910–Glu922. Residues Pro923–Arg949 show a composition bias toward basic and acidic residues. Residues Ser937 and Ser977 each carry the phosphoserine modification. Phosphothreonine is present on residues Thr989 and Thr1010. The segment at Pro991–Arg1045 is disordered. Residues Ala998 to Pro1015 show a composition bias toward pro residues. The segment covering Glu1029–Arg1045 has biased composition (basic and acidic residues).

The protein belongs to the AUTS2 family.

The sequence is that of Fibrosin-1-like protein (FBRSL1) from Homo sapiens (Human).